Reading from the N-terminus, the 285-residue chain is Diaminopimelate epimerase 2 (285 aa).

Substrate contacts are provided by residues Asn11, Asn63, 73–74 (GN), Asn158, Asn191, 209–210 (ER), and 219–220 (GS).

This sequence belongs to the diaminopimelate epimerase family. In terms of assembly, homodimer.

The protein localises to the cytoplasm. It carries out the reaction (2S,6S)-2,6-diaminopimelate = meso-2,6-diaminopimelate. The protein operates within amino-acid biosynthesis; L-lysine biosynthesis via DAP pathway; DL-2,6-diaminopimelate from LL-2,6-diaminopimelate: step 1/1. Catalyzes the stereoinversion of LL-2,6-diaminopimelate (L,L-DAP) to meso-diaminopimelate (meso-DAP), a precursor of L-lysine and an essential component of the bacterial peptidoglycan. The protein is Diaminopimelate epimerase 2 of Nostoc sp. (strain PCC 7120 / SAG 25.82 / UTEX 2576).